Consider the following 517-residue polypeptide: Maturase K (517 aa).

Belongs to the intron maturase 2 family. MatK subfamily.

The protein resides in the plastid. It is found in the chloroplast. Functionally, usually encoded in the trnK tRNA gene intron. Probably assists in splicing its own and other chloroplast group II introns. The polypeptide is Maturase K (Phalaenopsis japonica (Orchid)).